Consider the following 754-residue polypeptide: Putative sulfate transporter YPR003C (754 aa).

A disordered region spans residues 1–91 (MTSNNSLLGR…NTSNTNNNDS (91 aa)). Residues 1–118 (MTSNNSLLGR…SWLPEYTFNK (118 aa)) are Cytoplasmic-facing. A compositionally biased stretch (basic and acidic residues) spans 25 to 45 (RSVDQRDTFSDNFDYDKDSSN). Positions 65–89 (NSRSGCTNNTNNTNNTSNTSNTNNN) are enriched in low complexity. A helical transmembrane segment spans residues 119–139 (LWGDVIAGISVASFQIPLALS). The Lumenal segment spans residues 140 to 146 (YTTSIAH). Residues 147-167 (VPPLCGLYSLAISPFVYGILG) traverse the membrane as a helical segment. Over 168–172 (SVPQM) the chain is Cytoplasmic. A helical membrane pass occupies residues 173–193 (IVGPESAISLVVGQAVESITL). Topologically, residues 194–199 (HKENVS) are lumenal. The helical transmembrane segment at 200-220 (LIDISTVITFVSGTILLFSGI) threads the bilayer. Topologically, residues 221-232 (SRFGFLGNVLSK) are cytoplasmic. A helical transmembrane segment spans residues 233-253 (ALLRGFISSVGLVMIINSLIS). Residues 254–282 (ELKLDKFLVSLPQHYHTPFEKILFLIDYA) lie on the Lumenal side of the membrane. The helical transmembrane segment at 283–303 (PAQYHIPTAIFSGCCLIVLFL) threads the bilayer. The Cytoplasmic portion of the chain corresponds to 304–317 (TRLLKRKLMKYHKS). A helical membrane pass occupies residues 318-338 (AIFFPDILLVVIVTILISMKF). The Lumenal portion of the chain corresponds to 339–370 (NLKHRYGISIIGDFSMDNFDELKNPLTRPRRK). The helical transmembrane segment at 371–391 (LIPDLFSASLIVAMLGFFEST) threads the bilayer. Topologically, residues 392–410 (TASKSLGTTYNLTVSSNRE) are cytoplasmic. The chain crosses the membrane as a helical span at residues 411 to 431 (LVALGFMNIVISLFGALPAFG). The Lumenal portion of the chain corresponds to 432-450 (GYGRSKINALSGAQSVMSG). The chain crosses the membrane as a helical span at residues 451 to 471 (VFMGVITLITMNLLLQFVHYI). The Cytoplasmic portion of the chain corresponds to 472-474 (PNC). A helical transmembrane segment spans residues 475–495 (VLSVITTIIGISLLEEVPGDI). Over 496–517 (KFHLRCGGFSELFVFAVTFCTT) the chain is Lumenal. The helical transmembrane segment at 518-538 (IFYSIEAGICIGCVYSIINII) threads the bilayer. At 539-754 (KHSAKSRIQI…SNTLFNSSLV (216 aa)) the chain is on the cytoplasmic side. The STAS domain maps to 574–725 (DVEGTEEIEG…DSIDAALYEI (152 aa)).

It belongs to the SLC26A/SulP transporter (TC 2.A.53) family.

It localises to the endoplasmic reticulum membrane. In terms of biological role, possible sulfate transporter. This Saccharomyces cerevisiae (strain ATCC 204508 / S288c) (Baker's yeast) protein is Putative sulfate transporter YPR003C.